The sequence spans 791 residues: Disintegrin and metalloproteinase domain-containing protein 1a (791 aa).

A signal peptide spans Met-1–Cys-65. N-linked (GlcNAc...) asparagine glycosylation occurs at Asn-72. Residues Cys-201 to Lys-220 form a disordered region. Residues Lys-235–Pro-429 enclose the Peptidase M12B domain. N-linked (GlcNAc...) asparagine glycosylation occurs at Asn-256. Cystine bridges form between Cys-345-Cys-424, Cys-385-Cys-408, and Cys-387-Cys-393. Zn(2+) is bound at residue His-370. Glu-371 is an active-site residue. Zn(2+) is bound by residues His-374 and His-380. N-linked (GlcNAc...) asparagine glycans are attached at residues Asn-407 and Asn-484. Residues Ala-438–Asp-522 enclose the Disintegrin domain. A disulfide bridge connects residues Cys-494 and Cys-514. N-linked (GlcNAc...) asparagine glycosylation occurs at Asn-630. The 35-residue stretch at Leu-663–Ser-697 folds into the EGF-like domain. Cystine bridges form between Cys-667-Cys-679, Cys-673-Cys-685, and Cys-687-Cys-696. The helical transmembrane segment at Val-741 to Ala-761 threads the bilayer. At Tyr-762 to Gln-791 the chain is on the cytoplasmic side. The interval Ser-772–Gln-791 is disordered.

Heterodimer with ADAM2/fertilin subunit beta. In terms of tissue distribution, testis.

It is found in the membrane. Functionally, may be involved in sperm-egg fusion. The protein is Disintegrin and metalloproteinase domain-containing protein 1a (Adam1a) of Mus musculus (Mouse).